The primary structure comprises 505 residues: E3 SUMO-protein ligase PIAS4-A (505 aa).

Residues 12–46 (VKSFRVSDLQTLLASMGRSKSGLKQDLVGRALRLV) form the SAP domain. An LXXLL motif motif is present at residues 20-24 (LQTLL). Residue Lys-35 forms a Glycyl lysine isopeptide (Lys-Gly) (interchain with G-Cter in SUMO); alternate linkage. A Glycyl lysine isopeptide (Lys-Gly) (interchain with G-Cter in SUMO2); alternate cross-link involves residue Lys-35. Residues Lys-56 and Lys-68 each participate in a glycyl lysine isopeptide (Lys-Gly) (interchain with G-Cter in SUMO2) cross-link. The PINIT domain maps to 104–264 (GIPKPAPPPA…SVAVYLVRVF (161 aa)). Residues 296 to 381 (PESEIATTGL…LKETPEDVEE (86 aa)) form an SP-RING-type zinc finger. Zn(2+)-binding residues include Cys-327, His-329, Cys-350, and Cys-353. Positions 374–505 (ETPEDVEEIE…DYDKDLVTAY (132 aa)) are required for nuclear localization. Residues 395 to 407 (DDKEKERERENSR) show a composition bias toward basic and acidic residues. Residues 395–505 (DDKEKERERE…DYDKDLVTAY (111 aa)) are disordered. The span at 437 to 457 (SGSGGASAGTGSTSGGSGGGT) shows a compositional bias: gly residues. Positions 462 to 485 (TLDDSSEEEGGGGAEDSEETDDSQ) are enriched in acidic residues. Over residues 493–505 (GRYDYDKDLVTAY) the composition is skewed to basic and acidic residues.

This sequence belongs to the PIAS family. Sumoylated. Lys-35 is the main site of sumoylation. Highly expressed in spleen, liver, and brain. Expressed at lower levels in heart, intestine, kidney, gill, skin, and muscle.

It is found in the nucleus. The enzyme catalyses S-ubiquitinyl-[E2 ubiquitin-conjugating enzyme]-L-cysteine + [acceptor protein]-L-lysine = [E2 ubiquitin-conjugating enzyme]-L-cysteine + N(6)-ubiquitinyl-[acceptor protein]-L-lysine.. The protein operates within protein modification; protein sumoylation. Functions as an E3-type small ubiquitin-like modifier (SUMO) ligase. May play a role as a transcriptional coregulator in various cellular pathways. Catalyzes conjugation of SUMO2 to KAT5 in response to DNA damage, facilitating repair of DNA double-strand breaks (DSBs) via homologous recombination (HR). Mediates sumoylation of PARP1 in response to PARP1 trapping to chromatin. Negatively regulates induction of interferon phi 1 (ifnphi1) mediated by mavs and ticam1/trif. Also inhibits ifnphi1-mediated activation of the interferon-stimulated genes (ISGs) pkz and cd40, and to a lesser extent rsad2 and isg15. May inhibit ticam1/trif-mediated activation of NF-kappa-B. This chain is E3 SUMO-protein ligase PIAS4-A, found in Danio rerio (Zebrafish).